The primary structure comprises 949 residues: Glutamate receptor ionotropic, kainate 1 (949 aa).

An N-terminal signal peptide occupies residues 1–30 (MERSTVLIQPGLWTRDTSWTLLYFLCYILP). The Extracellular segment spans residues 31–576 (QTSPQVLRIG…VFSFLNPLSP (546 aa)). 7 N-linked (GlcNAc...) asparagine glycosylation sites follow: Asn-68, Asn-74, Asn-276, Asn-379, Asn-428, Asn-439, and Asn-446. The L-glutamate site is built by Pro-531, Thr-533, and Arg-538. Asn-561 carries an N-linked (GlcNAc...) asparagine glycan. Residues 577-597 (DIWMYVLLACLGVSCVLFVIA) traverse the membrane as a helical segment. Residues 598–653 (RFTPYEWYNPHPCNPDSDVVENNFTLLNSFWFGVGALMQQGSELMPKALSTRIVGG) are Cytoplasmic-facing. The chain crosses the membrane as a helical span at residues 654-674 (IWWFFTLIIISSYTANLAAFL). Over 675-834 (TVERMESPID…KEASALGVEN (160 aa)) the chain is Extracellular. 2 residues coordinate L-glutamate: Ser-704 and Thr-705. Ser-725 carries the phosphoserine; by PKC modification. Glu-753 is a binding site for L-glutamate. Thr-761 carries the phosphothreonine; by PKC modification. A disulfide bridge connects residues Cys-765 and Cys-819. The N-linked (GlcNAc...) asparagine glycan is linked to Asn-766. A helical transmembrane segment spans residues 835–855 (IGGIFIVLAAGLVLSVFVAIG). Residues 856-949 (EFLYKSRKNN…RRTQRKETVA (94 aa)) are Cytoplasmic-facing.

It belongs to the glutamate-gated ion channel (TC 1.A.10.1) family. GRIK1 subfamily. Homotetramer or heterotetramer of pore-forming glutamate receptor subunits. Tetramers may be formed by the dimerization of dimers. Can form functional heteromeric receptors with GRIK4 and GRIK5. Interacts with KLHL17. Expressed in the olfactory bulb (at protein level). Expressed in subsets of neurons throughout the developing and adult central and peripheral nervous systems. In the CNS principally in the medial amygdaloid nuclei, medial habenulae, pyriform and cingulate cortices, and Purkinje cell layer. Also highly expressed in embryonic and adult dorsal root ganglia. Expressed at high levels in the trigeminal ganglion neurons.

The protein resides in the cell membrane. The protein localises to the postsynaptic cell membrane. It carries out the reaction Ca(2+)(in) = Ca(2+)(out). Its function is as follows. Ionotropic glutamate receptor that functions as a cation-permeable ligand-gated ion channel, gated by L-glutamate and the glutamatergic agonist kainic acid. L-glutamate acts as an excitatory neurotransmitter at many synapses in the central nervous system. Binding of the excitatory neurotransmitter L-glutamate induces a conformation change, leading to the opening of the cation channel, and thereby converts the chemical signal to an electrical impulse. The receptor then desensitizes rapidly and enters a transient inactive state, characterized by the presence of bound agonist. This is Glutamate receptor ionotropic, kainate 1 (Grik1) from Rattus norvegicus (Rat).